The chain runs to 140 residues: Transmembrane protein 107 (140 aa).

A run of 2 helical transmembrane segments spans residues 7–27 (LVPS…TLFW) and 53–73 (LVAA…GFLS). N-linked (GlcNAc...) asparagine glycosylation is present at Asn-79. A run of 2 helical transmembrane segments spans residues 83–103 (SLLS…FIFE) and 113–133 (IFAF…IAVF).

Part of the tectonic-like complex (also named B9 complex). Interacts with TMEM237, TMEM231, MKS1 and TMEM216.

The protein localises to the membrane. It localises to the cell projection. The protein resides in the cilium. Its function is as follows. Plays a role in cilia formation and embryonic patterning. Requires for normal Sonic hedgehog (Shh) signaling in the neural tube and acts in combination with GLI2 and GLI3 to pattern ventral and intermediate neuronal cell types. During ciliogenesis regulates the ciliary transition zone localization of some MKS complex proteins. This Rattus norvegicus (Rat) protein is Transmembrane protein 107.